The sequence spans 309 residues: HPr kinase/phosphorylase (309 aa).

Residues histidine 139 and lysine 160 contribute to the active site. ATP is bound at residue 154 to 161 (GESGIGKS). Serine 161 is a Mg(2+) binding site. The Proton acceptor; for phosphorylation activity. Proton donor; for dephosphorylation activity role is filled by aspartate 178. The tract at residues 202 to 211 (IELRGIGIID) is important for the catalytic mechanism of both phosphorylation and dephosphorylation. Position 203 (glutamate 203) interacts with Mg(2+). Arginine 244 is an active-site residue. Residues 265–270 (PIRPGR) form an important for the catalytic mechanism of dephosphorylation region.

Belongs to the HPrK/P family. As to quaternary structure, homohexamer. The cofactor is Mg(2+).

It catalyses the reaction [HPr protein]-L-serine + ATP = [HPr protein]-O-phospho-L-serine + ADP + H(+). The enzyme catalyses [HPr protein]-O-phospho-L-serine + phosphate + H(+) = [HPr protein]-L-serine + diphosphate. Its function is as follows. Catalyzes the ATP- as well as the pyrophosphate-dependent phosphorylation of a specific serine residue in HPr, a phosphocarrier protein of the phosphoenolpyruvate-dependent sugar phosphotransferase system (PTS). HprK/P also catalyzes the pyrophosphate-producing, inorganic phosphate-dependent dephosphorylation (phosphorolysis) of seryl-phosphorylated HPr (P-Ser-HPr). The two antagonistic activities of HprK/P are regulated by several intracellular metabolites, which change their concentration in response to the absence or presence of rapidly metabolisable carbon sources (glucose, fructose, etc.) in the growth medium. Therefore, by controlling the phosphorylation state of HPr, HPrK/P is a sensor enzyme that plays a major role in the regulation of carbon metabolism and sugar transport: it mediates carbon catabolite repression (CCR), and regulates PTS-catalyzed carbohydrate uptake and inducer exclusion. This Lachnoclostridium phytofermentans (strain ATCC 700394 / DSM 18823 / ISDg) (Clostridium phytofermentans) protein is HPr kinase/phosphorylase.